Consider the following 255-residue polypeptide: Type III pantothenate kinase (255 aa).

6–13 serves as a coordination point for ATP; it reads DIGNTNIK. Substrate is bound at residue 107 to 110; sequence GADR. The active-site Proton acceptor is the Asp-109. Thr-132 lines the ATP pocket. Substrate is bound at residue Thr-184.

It belongs to the type III pantothenate kinase family. In terms of assembly, homodimer. Requires NH4(+) as cofactor. K(+) serves as cofactor.

It localises to the cytoplasm. It carries out the reaction (R)-pantothenate + ATP = (R)-4'-phosphopantothenate + ADP + H(+). It functions in the pathway cofactor biosynthesis; coenzyme A biosynthesis; CoA from (R)-pantothenate: step 1/5. Catalyzes the phosphorylation of pantothenate (Pan), the first step in CoA biosynthesis. This is Type III pantothenate kinase from Roseiflexus sp. (strain RS-1).